Here is a 233-residue protein sequence, read N- to C-terminus: MKAICVLSGGLDSAVTSLVAKSENYDITTVTFNYGQMALNQEIKSAEKISEILNADHHVIDINFVKEFSKSGLNTGNIPEPEKEDLDDFEKSEKTMKAVWVPARNMIMFSIASGFAEGIDAEKIFSGLNREEGVTFPDNTPEFIERFNKSLEYGTLNKVKMVAPLYELNKPEIAKLGKELELKLDLEVIKYSYSCYRDNGEDYLHCGTCESCMRRKRAFKEAGIVDPTKYLVE.

An ATP-binding site is contributed by 7–17 (LSGGLDSAVTS). Zn(2+) contacts are provided by C195, C206, C209, and C212.

This sequence belongs to the QueC family. Zn(2+) serves as cofactor.

It carries out the reaction 7-carboxy-7-deazaguanine + NH4(+) + ATP = 7-cyano-7-deazaguanine + ADP + phosphate + H2O + H(+). The protein operates within purine metabolism; 7-cyano-7-deazaguanine biosynthesis. Its function is as follows. Catalyzes the ATP-dependent conversion of 7-carboxy-7-deazaguanine (CDG) to 7-cyano-7-deazaguanine (preQ(0)). The sequence is that of 7-cyano-7-deazaguanine synthase from Methanococcus maripaludis (strain C5 / ATCC BAA-1333).